The sequence spans 1109 residues: DNA mismatch repair protein MSH7 (1109 aa).

Disordered stretches follow at residues 19 to 45 (TKGL…KEGD) and 61 to 86 (DEVR…KPAE). Positions 61-74 (DEVRGTDTPPEKVP) are enriched in basic and acidic residues. 853 to 860 (GPNMGGKS) is a binding site for ATP.

Belongs to the DNA mismatch repair MutS family. In terms of assembly, heterodimer consisting of MSH2-MSH7 (MutS gamma).

The protein resides in the nucleus. Functionally, component of the post-replicative DNA mismatch repair system (MMR). Forms the heterodimer MutS gamma (MSH2-MSH7 heterodimer) which binds to DNA mismatches thereby initiating DNA repair. MutS gamma recognizes specifically the T/G single base mismatch, but not trinucleotide insertion-deletion loops (IDL). The sequence is that of DNA mismatch repair protein MSH7 (MSH7) from Arabidopsis thaliana (Mouse-ear cress).